The following is a 916-amino-acid chain: Phosphoenolpyruvate carboxylase (916 aa).

Residues H144 and K578 contribute to the active site.

This sequence belongs to the PEPCase type 1 family. Requires Mg(2+) as cofactor.

The catalysed reaction is oxaloacetate + phosphate = phosphoenolpyruvate + hydrogencarbonate. Forms oxaloacetate, a four-carbon dicarboxylic acid source for the tricarboxylic acid cycle. The chain is Phosphoenolpyruvate carboxylase from Aromatoleum aromaticum (strain DSM 19018 / LMG 30748 / EbN1) (Azoarcus sp. (strain EbN1)).